The following is a 90-amino-acid chain: YcgL domain-containing protein YpsIP31758_2009 (90 aa).

Residues 1 to 85 enclose the YcgL domain; sequence MLCAIYRSPK…PPESLLKMHL (85 aa).

This chain is YcgL domain-containing protein YpsIP31758_2009, found in Yersinia pseudotuberculosis serotype O:1b (strain IP 31758).